The sequence spans 249 residues: 6-phosphogluconolactonase 3 (249 aa).

Belongs to the glucosamine/galactosamine-6-phosphate isomerase family. 6-phosphogluconolactonase subfamily.

The protein resides in the cytoplasm. Its subcellular location is the nucleus. It catalyses the reaction 6-phospho-D-glucono-1,5-lactone + H2O = 6-phospho-D-gluconate + H(+). Its pathway is carbohydrate degradation; pentose phosphate pathway; D-ribulose 5-phosphate from D-glucose 6-phosphate (oxidative stage): step 2/3. Its function is as follows. Hydrolysis of 6-phosphogluconolactone to 6-phosphogluconate. This Saccharomyces cerevisiae (strain RM11-1a) (Baker's yeast) protein is 6-phosphogluconolactonase 3 (SOL3).